The chain runs to 382 residues: Low-specificity L-threonine aldolase (382 aa).

K214 is modified (N6-(pyridoxal phosphate)lysine).

It belongs to the threonine aldolase family. As to quaternary structure, homotetramer. Pyridoxal 5'-phosphate is required as a cofactor.

The enzyme catalyses L-threonine = acetaldehyde + glycine. It carries out the reaction L-allo-threonine = acetaldehyde + glycine. The protein operates within amino-acid degradation; L-threonine degradation via aldolase pathway; acetaldehyde and glycine from L-threonine: step 1/1. The sequence is that of Low-specificity L-threonine aldolase (GLY1) from Eremothecium gossypii (strain ATCC 10895 / CBS 109.51 / FGSC 9923 / NRRL Y-1056) (Yeast).